Reading from the N-terminus, the 360-residue chain is Aminomethyltransferase (360 aa).

This sequence belongs to the GcvT family. The glycine cleavage system is composed of four proteins: P, T, L and H.

The enzyme catalyses N(6)-[(R)-S(8)-aminomethyldihydrolipoyl]-L-lysyl-[protein] + (6S)-5,6,7,8-tetrahydrofolate = N(6)-[(R)-dihydrolipoyl]-L-lysyl-[protein] + (6R)-5,10-methylene-5,6,7,8-tetrahydrofolate + NH4(+). Its function is as follows. The glycine cleavage system catalyzes the degradation of glycine. The chain is Aminomethyltransferase from Flavobacterium psychrophilum (strain ATCC 49511 / DSM 21280 / CIP 103535 / JIP02/86).